Consider the following 379-residue polypeptide: Elongation factor Ts, mitochondrial (379 aa).

The N-terminal 33 residues, 1-33, are a transit peptide targeting the mitochondrion; the sequence is MAWGQGAKRSILGLLFRSQHQTARAYSSSAFQT.

Belongs to the EF-Ts family.

Its subcellular location is the mitochondrion. In terms of biological role, associates with the EF-Tu.GDP complex and induces the exchange of GDP to GTP. It remains bound to the aminoacyl-tRNA.EF-Tu.GTP complex up to the GTP hydrolysis stage on the ribosome. The polypeptide is Elongation factor Ts, mitochondrial (Zea mays (Maize)).